We begin with the raw amino-acid sequence, 210 residues long: Translation initiation factor IF-3 (210 aa).

A disordered region spans residues 169–210 (APKQAPAPKKERTEESAEKAGSAGETEPVPAASAAAEAPANV). Basic and acidic residues predominate over residues 176–186 (PKKERTEESAE). Residues 187-210 (KAGSAGETEPVPAASAAAEAPANV) are compositionally biased toward low complexity.

This sequence belongs to the IF-3 family. In terms of assembly, monomer.

It is found in the cytoplasm. IF-3 binds to the 30S ribosomal subunit and shifts the equilibrium between 70S ribosomes and their 50S and 30S subunits in favor of the free subunits, thus enhancing the availability of 30S subunits on which protein synthesis initiation begins. This chain is Translation initiation factor IF-3, found in Deinococcus deserti (strain DSM 17065 / CIP 109153 / LMG 22923 / VCD115).